The following is a 178-amino-acid chain: tRNA (cytidine(56)-2'-O)-methyltransferase (178 aa).

S-adenosyl-L-methionine contacts are provided by residues leucine 84, 109–113 (GAEKV), and 127–134 (IGNQPHSE).

The protein belongs to the aTrm56 family. As to quaternary structure, homodimer.

The protein localises to the cytoplasm. The enzyme catalyses cytidine(56) in tRNA + S-adenosyl-L-methionine = 2'-O-methylcytidine(56) in tRNA + S-adenosyl-L-homocysteine + H(+). In terms of biological role, specifically catalyzes the AdoMet-dependent 2'-O-ribose methylation of cytidine at position 56 in tRNAs. The protein is tRNA (cytidine(56)-2'-O)-methyltransferase of Methanococcoides burtonii (strain DSM 6242 / NBRC 107633 / OCM 468 / ACE-M).